The chain runs to 310 residues: Methionyl-tRNA formyltransferase (310 aa).

A (6S)-5,6,7,8-tetrahydrofolate-binding site is contributed by 110-113; sequence SLLP.

It belongs to the Fmt family.

The enzyme catalyses L-methionyl-tRNA(fMet) + (6R)-10-formyltetrahydrofolate = N-formyl-L-methionyl-tRNA(fMet) + (6S)-5,6,7,8-tetrahydrofolate + H(+). Its function is as follows. Attaches a formyl group to the free amino group of methionyl-tRNA(fMet). The formyl group appears to play a dual role in the initiator identity of N-formylmethionyl-tRNA by promoting its recognition by IF2 and preventing the misappropriation of this tRNA by the elongation apparatus. This chain is Methionyl-tRNA formyltransferase, found in Streptomyces coelicolor (strain ATCC BAA-471 / A3(2) / M145).